The following is a 114-amino-acid chain: Large ribosomal subunit protein uL22 (114 aa).

The protein belongs to the universal ribosomal protein uL22 family. Part of the 50S ribosomal subunit.

This protein binds specifically to 23S rRNA; its binding is stimulated by other ribosomal proteins, e.g. L4, L17, and L20. It is important during the early stages of 50S assembly. It makes multiple contacts with different domains of the 23S rRNA in the assembled 50S subunit and ribosome. Functionally, the globular domain of the protein is located near the polypeptide exit tunnel on the outside of the subunit, while an extended beta-hairpin is found that lines the wall of the exit tunnel in the center of the 70S ribosome. The polypeptide is Large ribosomal subunit protein uL22 (Ehrlichia chaffeensis (strain ATCC CRL-10679 / Arkansas)).